The primary structure comprises 314 residues: FHA domain-containing protein DDL (314 aa).

Residues 1 to 10 show a composition bias toward low complexity; it reads MAPSSRSPSP. Residues 1-146 form a disordered region; that stretch reads MAPSSRSPSP…NVEEDSVARM (146 aa). Residues 18 to 127 are compositionally biased toward basic and acidic residues; the sequence is ARGEKEIGRS…AIASRHDEGS (110 aa). Ser133 is subject to Phosphoserine. In terms of domain architecture, FHA spans 219–282; that stretch reads YLFGRERRIA…NKTYINESPI (64 aa).

As to quaternary structure, interacts with DCL1 (via N-terminus). Expressed in roots, lateral roots, vascular strands of roots and leaves, vegetative meristems, pollen and developing seeds.

It localises to the nucleus. Involved in the microRNA (miRNA) and short interfering RNA (siRNA) biogenesis. May facilitate DCL1 to access or recognize primary miRNAs. Binds RNA non-specifically. The polypeptide is FHA domain-containing protein DDL (DDL) (Arabidopsis thaliana (Mouse-ear cress)).